The chain runs to 343 residues: MKNLLDLSYEELITEITNLGLERYRADQILDWIFNKKVNNFDEMTNLSKKHRALLKEHFSIPFLKLLDKKVSRIDGTTKFLWELEDGNTIESVMLFHPDRITACISTQVGCPVKCIFCATGMSGFVRNLTTGEIVAQILSMEKEEKKKIGNVVYMGMGEPLLNYENTIKSIRTLNHKKMGNIGIRRITISTVGIPDRIIQLAEEGLDVKLALSLHAPTNFKRDQLVPLNKKYSIEEILNAVKIYQKKTGNRVTIEYVLIKGMNDEISDAKKLAEILKNMKVFVNLIPVNPTVEDLKKPSRERLLTFKRILLESGIEAEIRREKGADIEAACGQLRLKRIKSTS.

Glu-91 (proton acceptor) is an active-site residue. The Radical SAM core domain maps to 97–326 (HPDRITACIS…AEIRREKGAD (230 aa)). An intrachain disulfide couples Cys-104 to Cys-331. [4Fe-4S] cluster is bound by residues Cys-111, Cys-115, and Cys-118. Residues 158–159 (GE), Ser-190, 213–215 (SLH), and Asn-289 contribute to the S-adenosyl-L-methionine site. Catalysis depends on Cys-331, which acts as the S-methylcysteine intermediate.

It belongs to the radical SAM superfamily. RlmN family. [4Fe-4S] cluster serves as cofactor.

Its subcellular location is the cytoplasm. It carries out the reaction adenosine(2503) in 23S rRNA + 2 reduced [2Fe-2S]-[ferredoxin] + 2 S-adenosyl-L-methionine = 2-methyladenosine(2503) in 23S rRNA + 5'-deoxyadenosine + L-methionine + 2 oxidized [2Fe-2S]-[ferredoxin] + S-adenosyl-L-homocysteine. It catalyses the reaction adenosine(37) in tRNA + 2 reduced [2Fe-2S]-[ferredoxin] + 2 S-adenosyl-L-methionine = 2-methyladenosine(37) in tRNA + 5'-deoxyadenosine + L-methionine + 2 oxidized [2Fe-2S]-[ferredoxin] + S-adenosyl-L-homocysteine. Its function is as follows. Specifically methylates position 2 of adenine 2503 in 23S rRNA and position 2 of adenine 37 in tRNAs. This is Probable dual-specificity RNA methyltransferase RlmN from Thermotoga petrophila (strain ATCC BAA-488 / DSM 13995 / JCM 10881 / RKU-1).